A 911-amino-acid polypeptide reads, in one-letter code: Isoleucine--tRNA ligase (911 aa).

The short motif at proline 57 to histidine 67 is the 'HIGH' region element. Position 564 (glutamate 564) interacts with L-isoleucyl-5'-AMP. Positions lysine 605–serine 609 match the 'KMSKS' region motif. Lysine 608 is an ATP binding site. Positions 887, 890, 902, and 905 each coordinate Zn(2+).

It belongs to the class-I aminoacyl-tRNA synthetase family. IleS type 1 subfamily. As to quaternary structure, monomer. The cofactor is Zn(2+).

Its subcellular location is the cytoplasm. It carries out the reaction tRNA(Ile) + L-isoleucine + ATP = L-isoleucyl-tRNA(Ile) + AMP + diphosphate. In terms of biological role, catalyzes the attachment of isoleucine to tRNA(Ile). As IleRS can inadvertently accommodate and process structurally similar amino acids such as valine, to avoid such errors it has two additional distinct tRNA(Ile)-dependent editing activities. One activity is designated as 'pretransfer' editing and involves the hydrolysis of activated Val-AMP. The other activity is designated 'posttransfer' editing and involves deacylation of mischarged Val-tRNA(Ile). This is Isoleucine--tRNA ligase from Nautilia profundicola (strain ATCC BAA-1463 / DSM 18972 / AmH).